Here is a 157-residue protein sequence, read N- to C-terminus: Endoribonuclease YbeY (157 aa).

Zn(2+) contacts are provided by His114, His118, and His124.

Belongs to the endoribonuclease YbeY family. Zn(2+) is required as a cofactor.

It is found in the cytoplasm. Single strand-specific metallo-endoribonuclease involved in late-stage 70S ribosome quality control and in maturation of the 3' terminus of the 16S rRNA. The sequence is that of Endoribonuclease YbeY from Serratia proteamaculans (strain 568).